The sequence spans 337 residues: Cytoskeleton protein RodZ (337 aa).

Residues 1 to 111 (MNTEATHDQN…LGKRRKKRDG (111 aa)) are Cytoplasmic-facing. Residues 19–71 (LRNAREQLGLSQQAVAERLCLKVSTVRDIEEDKAPADLASTFLRGYIRSYARL) enclose the HTH cro/C1-type domain. Residues 30–49 (QQAVAERLCLKVSTVRDIEE) constitute a DNA-binding region (H-T-H motif). A helical; Signal-anchor for type II membrane protein transmembrane segment spans residues 112-132 (WLMTFTWLVLFVVIGLSGAWW). The Periplasmic segment spans residues 133 to 337 (WQDHKAQQEE…TLNAEQSPAQ (205 aa)). Residues 145-167 (TMADQSSAELSSNSEQGQSVPLN) show a composition bias toward polar residues. Residues 145 to 235 (TMADQSSAEL…PTAATTPDGA (91 aa)) are disordered. The span at 168-207 (TSTTTDPATTSTPPASVDTTATNTQTPAVTAPAPAVDPQQ) shows a compositional bias: low complexity. The span at 208 to 218 (NAVVSPSQANV) shows a compositional bias: polar residues. Low complexity predominate over residues 219 to 235 (DTAATPAPTAATTPDGA).

The protein belongs to the RodZ family.

It is found in the cell inner membrane. Functionally, cytoskeletal protein that is involved in cell-shape control through regulation of the length of the long axis. The chain is Cytoskeleton protein RodZ from Shigella boydii serotype 4 (strain Sb227).